Consider the following 263-residue polypeptide: Outer membrane lipoprotein 3 (263 aa).

The N-terminal stretch at 1-19 (MKIMKLAGAVAIFSLFLTA) is a signal peptide. C20 is lipidated: N-palmitoyl cysteine. C20 carries the S-diacylglycerol cysteine lipid modification.

It belongs to the NlpA lipoprotein family.

The protein localises to the cell outer membrane. The protein is Outer membrane lipoprotein 3 (plpC) of Mannheimia haemolytica (Pasteurella haemolytica).